Consider the following 770-residue polypeptide: Cullin-1 (770 aa).

In terms of domain architecture, Cullin neddylation spans 700–761; it reads DRKLQIQAAI…EKEYLMRVEG (62 aa). Lys-714 participates in a covalent cross-link: Glycyl lysine isopeptide (Lys-Gly) (interchain with G-Cter in NEDD8).

The protein belongs to the cullin family. Part of a complex that includes culA, fbxA and regA. Formation of this complex is dependent on the MAP kinase erkB. In terms of processing, neddylated; which enhances the ubiquitination activity of SCF.

It functions in the pathway protein modification; protein ubiquitination. In terms of biological role, probable core component of cullin-based SCF-like E3 ubiquitin-protein ligase complexes which mediate the ubiquitination and subsequent proteasomal degradation of target proteins. The E3 ubiquitin-protein ligase activity of the complex is dependent on the neddylation of the cullin subunit. Required at several stages during development. CulA and fbxA regulate multicellular development by targeting regA for degradation via a pathway that requires erkB function, leading to an increase in cAMP and PKA activity. This chain is Cullin-1 (culA), found in Dictyostelium discoideum (Social amoeba).